A 230-amino-acid polypeptide reads, in one-letter code: Uracil-DNA glycosylase (230 aa).

D70 serves as the catalytic Proton acceptor.

The protein belongs to the uracil-DNA glycosylase (UDG) superfamily. UNG family.

The protein localises to the cytoplasm. It catalyses the reaction Hydrolyzes single-stranded DNA or mismatched double-stranded DNA and polynucleotides, releasing free uracil.. Its function is as follows. Excises uracil residues from the DNA which can arise as a result of misincorporation of dUMP residues by DNA polymerase or due to deamination of cytosine. The polypeptide is Uracil-DNA glycosylase (Pseudomonas syringae pv. tomato (strain ATCC BAA-871 / DC3000)).